Reading from the N-terminus, the 444-residue chain is Methylenetetrahydrofolate--tRNA-(uracil-5-)-methyltransferase TrmFO (444 aa).

10–15 contributes to the FAD binding site; it reads GAGLAG.

The protein belongs to the MnmG family. TrmFO subfamily. FAD is required as a cofactor.

It localises to the cytoplasm. It carries out the reaction uridine(54) in tRNA + (6R)-5,10-methylene-5,6,7,8-tetrahydrofolate + NADH + H(+) = 5-methyluridine(54) in tRNA + (6S)-5,6,7,8-tetrahydrofolate + NAD(+). The enzyme catalyses uridine(54) in tRNA + (6R)-5,10-methylene-5,6,7,8-tetrahydrofolate + NADPH + H(+) = 5-methyluridine(54) in tRNA + (6S)-5,6,7,8-tetrahydrofolate + NADP(+). Functionally, catalyzes the folate-dependent formation of 5-methyl-uridine at position 54 (M-5-U54) in all tRNAs. In Streptococcus gordonii (strain Challis / ATCC 35105 / BCRC 15272 / CH1 / DL1 / V288), this protein is Methylenetetrahydrofolate--tRNA-(uracil-5-)-methyltransferase TrmFO.